Consider the following 109-residue polypeptide: Phycoerythrin alpha-2 subunit (109 aa).

The (2R,3E)-phycoerythrobilin site is built by aspartate 52, serine 53, glutamate 63, arginine 64, cysteine 67, threonine 72, lysine 74, alanine 75, and lysine 84.

This sequence belongs to the phycoerythrin family. As to quaternary structure, heterotetramer of 2 different alpha chains and 2 identical beta chains which form 2 alpha-beta heterodimers within the heterotetramer. The two alpha-beta heterodimers are rotated to an open configuration in contrast to the closed configuration found in other cryptophyte species due to the insertion of a single amino acid, Asp-65, in a conserved region of the alpha chain. In the open form, the central chromophores are not in physical contact but are separated by a water-filled channel. In terms of processing, contains three phycoerythrobilin chromophores with binding mediated by both the alpha and beta subunits.

Its subcellular location is the plastid. The protein localises to the chloroplast thylakoid membrane. Light-harvesting photosynthetic tetrapyrrole chromophore-protein from the phycobiliprotein complex. The sequence is that of Phycoerythrin alpha-2 subunit from Hemiselmis andersenii (Cryptophyte alga).